A 165-amino-acid chain; its full sequence is Pyruvoyl-dependent arginine decarboxylase (165 aa).

Pyruvic acid (Ser) is present on serine 53.

The protein belongs to the PdaD family. In terms of assembly, trimer of an alpha-beta dimer. The cofactor is pyruvate.

The catalysed reaction is L-arginine + H(+) = agmatine + CO2. This chain is Pyruvoyl-dependent arginine decarboxylase (pdaD), found in Methanocaldococcus jannaschii (strain ATCC 43067 / DSM 2661 / JAL-1 / JCM 10045 / NBRC 100440) (Methanococcus jannaschii).